A 179-amino-acid polypeptide reads, in one-letter code: ATP synthase subunit delta (179 aa).

It belongs to the ATPase delta chain family. F-type ATPases have 2 components, F(1) - the catalytic core - and F(0) - the membrane proton channel. F(1) has five subunits: alpha(3), beta(3), gamma(1), delta(1), epsilon(1). F(0) has three main subunits: a(1), b(2) and c(10-14). The alpha and beta chains form an alternating ring which encloses part of the gamma chain. F(1) is attached to F(0) by a central stalk formed by the gamma and epsilon chains, while a peripheral stalk is formed by the delta and b chains.

It is found in the cell membrane. Its function is as follows. F(1)F(0) ATP synthase produces ATP from ADP in the presence of a proton or sodium gradient. F-type ATPases consist of two structural domains, F(1) containing the extramembraneous catalytic core and F(0) containing the membrane proton channel, linked together by a central stalk and a peripheral stalk. During catalysis, ATP synthesis in the catalytic domain of F(1) is coupled via a rotary mechanism of the central stalk subunits to proton translocation. Functionally, this protein is part of the stalk that links CF(0) to CF(1). It either transmits conformational changes from CF(0) to CF(1) or is implicated in proton conduction. In Staphylococcus epidermidis (strain ATCC 35984 / DSM 28319 / BCRC 17069 / CCUG 31568 / BM 3577 / RP62A), this protein is ATP synthase subunit delta.